A 299-amino-acid polypeptide reads, in one-letter code: MDATFPSQRNITTRPAPDRIRREKCKLAKRLRRQVGQAIADFGMIEANDKIMVCLSGGKDSYTLLDMLLQLRAKAPVPFELTAVNLDQKQPGFPKHVLPEYLSSIGVPYHIIEQDTYSVVTRVVPEGKTLCALCSRMRRGALYAYAETQGFTKIALGHHRDDMVATFFMNLFHHAKLSGMPPKLRSDNGKHVVIRPLAYVSETDIIAYADAREFPIIPCNLCGSQENLQRKQVGVMLKAWEKEYPSRIEQIARALGNIRPSQLADQSLFDFLALGRHSNTPLPNAHAWLAGDLANDTAP.

The PP-loop motif signature appears at 56–61 (SGGKDS). The [4Fe-4S] cluster site is built by Cys-131, Cys-134, and Cys-222.

Belongs to the TtcA family. As to quaternary structure, homodimer. It depends on Mg(2+) as a cofactor. Requires [4Fe-4S] cluster as cofactor.

Its subcellular location is the cytoplasm. The catalysed reaction is cytidine(32) in tRNA + S-sulfanyl-L-cysteinyl-[cysteine desulfurase] + AH2 + ATP = 2-thiocytidine(32) in tRNA + L-cysteinyl-[cysteine desulfurase] + A + AMP + diphosphate + H(+). The protein operates within tRNA modification. Catalyzes the ATP-dependent 2-thiolation of cytidine in position 32 of tRNA, to form 2-thiocytidine (s(2)C32). The sulfur atoms are provided by the cysteine/cysteine desulfurase (IscS) system. In Xylella fastidiosa (strain M12), this protein is tRNA-cytidine(32) 2-sulfurtransferase.